The chain runs to 215 residues: N-(5'-phosphoribosyl)anthranilate isomerase (215 aa).

This sequence belongs to the TrpF family.

The catalysed reaction is N-(5-phospho-beta-D-ribosyl)anthranilate = 1-(2-carboxyphenylamino)-1-deoxy-D-ribulose 5-phosphate. Its pathway is amino-acid biosynthesis; L-tryptophan biosynthesis; L-tryptophan from chorismate: step 3/5. The sequence is that of N-(5'-phosphoribosyl)anthranilate isomerase from Ruegeria sp. (strain TM1040) (Silicibacter sp.).